A 561-amino-acid chain; its full sequence is Type 2 DNA topoisomerase 6 subunit B (561 aa).

ATP contacts are provided by residues Asn46, Asp78, 99–100, 109–116, and Lys471; these read TK and GQQGIGIS.

It belongs to the TOP6B family. Homodimer. Heterotetramer of two Top6A and two Top6B chains.

It catalyses the reaction ATP-dependent breakage, passage and rejoining of double-stranded DNA.. Functionally, relaxes both positive and negative superturns and exhibits a strong decatenase activity. The protein is Type 2 DNA topoisomerase 6 subunit B of Thermococcus gammatolerans (strain DSM 15229 / JCM 11827 / EJ3).